An 880-amino-acid polypeptide reads, in one-letter code: Tyrosine-protein kinase receptor TYRO3 (880 aa).

An N-terminal signal peptide occupies residues 1-28; sequence MVYPGPPGLIAGLLLAALSLSCVDGAKA. 2 Ig-like C2-type domains span residues 29–114 and 125–206; these read LGFV…KSVS and PYFT…AIVE. Residues 29-414 lie on the Extracellular side of the membrane; sequence LGFVGHGYNL…QRHPHTRMSW (386 aa). N-linked (GlcNAc...) asparagine glycosylation is found at asparagine 37 and asparagine 49. A disulfide bond links cysteine 50 and cysteine 103. Asparagine 143 is a glycosylation site (N-linked (GlcNAc...) asparagine). Cysteine 146 and cysteine 189 are disulfide-bonded. Fibronectin type-III domains are found at residues 213-306 and 311-401; these read PPFN…TKET and LPQN…SKEE. N-linked (GlcNAc...) asparagine glycosylation is found at asparagine 216, asparagine 279, asparagine 351, and asparagine 365. The chain crosses the membrane as a helical span at residues 415–435; sequence VPMVLGILTALVTVVAMTLIF. Residues 436–880 lie on the Cytoplasmic side of the membrane; that stretch reads LRKGRKETRF…MQEEQVVITL (445 aa). The Protein kinase domain maps to 503–774; the sequence is FTLGRTLGKG…VDLKQRLEAI (272 aa). ATP is bound by residues 509–517 and lysine 535; that span reads LGKGEFGSV. Aspartate 640 (proton acceptor) is an active-site residue. Position 671 is a phosphotyrosine; by autocatalysis (tyrosine 671). The segment at 846 to 880 is disordered; it reads EWSSSAQNGEARGLLHEEEEEEEEEMQEEQVVITL. The segment covering 862 to 873 has biased composition (acidic residues); the sequence is EEEEEEEEEMQE.

Belongs to the protein kinase superfamily. Tyr protein kinase family. AXL/UFO subfamily. In terms of processing, tyrosine phosphorylated upon receptor stimulation. As to expression, detected in brain, spinal cord, intestine, lung, stomach, ovary, testis, skin and eye.

The protein resides in the cell membrane. The catalysed reaction is L-tyrosyl-[protein] + ATP = O-phospho-L-tyrosyl-[protein] + ADP + H(+). In terms of biological role, may be involved in cell adhesion processes, particularly in the central nervous system. The sequence is that of Tyrosine-protein kinase receptor TYRO3 (tyro3) from Xenopus laevis (African clawed frog).